Consider the following 878-residue polypeptide: Leucine--tRNA ligase (878 aa).

The short motif at 43 to 54 (PYPSAQGLHVGH) is the 'HIGH' region element. The short motif at 634 to 638 (KMSKA) is the 'KMSKS' region element. Residue lysine 637 participates in ATP binding.

It belongs to the class-I aminoacyl-tRNA synthetase family.

The protein resides in the cytoplasm. It catalyses the reaction tRNA(Leu) + L-leucine + ATP = L-leucyl-tRNA(Leu) + AMP + diphosphate. The chain is Leucine--tRNA ligase from Treponema pallidum subsp. pallidum (strain SS14).